Here is a 239-residue protein sequence, read N- to C-terminus: RING finger protein 151 (239 aa).

An RING-type zinc finger spans residues Cys-20 to Arg-58. A TRAF-type zinc finger spans residues Glu-101–Glu-156.

As to quaternary structure, interacts with DTNBP1. Expressed in testis. Expressed in round spermatids of the stages VII-VIII semniniferous tubules. Expressed in elongating spermatids of stages VIII-IX seminiferous tubules (at protein level).

It localises to the cytoplasm. It is found in the nucleus. Its function is as follows. May be involved in acrosome formation of spermatids. The chain is RING finger protein 151 (Rnf151) from Mus musculus (Mouse).